The sequence spans 393 residues: Bifunctional enzyme IspD/IspF (393 aa).

The 2-C-methyl-D-erythritol 4-phosphate cytidylyltransferase stretch occupies residues 1-234; that stretch reads MTTSQRTAAI…ARLAASLGDI (234 aa). Residues 235–393 are 2-C-methyl-D-erythritol 2,4-cyclodiphosphate synthase; the sequence is RTGTGYDVHA…SATIRLPWGA (159 aa). A divalent metal cation-binding residues include Asp-241 and His-243. 4-CDP-2-C-methyl-D-erythritol 2-phosphate is bound by residues 241-243 and 267-268; these read DVH and HS. His-275 serves as a coordination point for a divalent metal cation. 4-CDP-2-C-methyl-D-erythritol 2-phosphate contacts are provided by residues 289 to 291, 365 to 368, Phe-372, and Arg-375; these read DIG and TTSE.

It in the N-terminal section; belongs to the IspD/TarI cytidylyltransferase family. IspD subfamily. In the C-terminal section; belongs to the IspF family. Requires a divalent metal cation as cofactor.

It catalyses the reaction 2-C-methyl-D-erythritol 4-phosphate + CTP + H(+) = 4-CDP-2-C-methyl-D-erythritol + diphosphate. The catalysed reaction is 4-CDP-2-C-methyl-D-erythritol 2-phosphate = 2-C-methyl-D-erythritol 2,4-cyclic diphosphate + CMP. Its pathway is isoprenoid biosynthesis; isopentenyl diphosphate biosynthesis via DXP pathway; isopentenyl diphosphate from 1-deoxy-D-xylulose 5-phosphate: step 2/6. The protein operates within isoprenoid biosynthesis; isopentenyl diphosphate biosynthesis via DXP pathway; isopentenyl diphosphate from 1-deoxy-D-xylulose 5-phosphate: step 4/6. Bifunctional enzyme that catalyzes the formation of 4-diphosphocytidyl-2-C-methyl-D-erythritol from CTP and 2-C-methyl-D-erythritol 4-phosphate (MEP) (IspD), and catalyzes the conversion of 4-diphosphocytidyl-2-C-methyl-D-erythritol 2-phosphate (CDP-ME2P) to 2-C-methyl-D-erythritol 2,4-cyclodiphosphate (ME-CPP) with a corresponding release of cytidine 5-monophosphate (CMP) (IspF). This chain is Bifunctional enzyme IspD/IspF, found in Bradyrhizobium sp. (strain ORS 278).